We begin with the raw amino-acid sequence, 198 residues long: Succinate dehydrogenase [ubiquinone] cytochrome b subunit, mitochondrial (198 aa).

The transit peptide at 1 to 50 directs the protein to the mitochondrion; sequence MSAMMVKLGLNKSALLLKPSAFSRAAALSSSRRLLFNTARTNFLSTSPLK. The Mitochondrial matrix portion of the chain corresponds to 51-99; sequence NVASEMNTKAAIAEEQILNKQRAKRPISPHLTIYQPQLTWYLSSLHRIS. S93 and R97 together coordinate a ubiquinone. A helical membrane pass occupies residues 100–120; sequence LVLMGLGFYLFTILFGVSGLL. At 121–139 the chain is on the mitochondrial intermembrane side; that stretch reads GLGLTTEKVSNWYHQKFSK. The chain crosses the membrane as a helical span at residues 140–160; sequence ITEWSIKGSFAYLFAIHYGGA. H156 provides a ligand contact to heme. Over 161–175 the chain is Mitochondrial matrix; it reads IRHLIWDTAKELTLK. Residues 176–196 form a helical membrane-spanning segment; that stretch reads GVYRTGYALIGFTAVLGTYLL. At 197 to 198 the chain is on the mitochondrial intermembrane side; the sequence is TL.

This sequence belongs to the cytochrome b560 family. In terms of assembly, forms part of complex II containing four subunits: a flavoprotein (FP), an iron-sulfur protein (IP) and a cytochrome b composed of two integral membrane proteins. Requires heme as cofactor.

The protein resides in the mitochondrion inner membrane. It functions in the pathway carbohydrate metabolism; tricarboxylic acid cycle. In terms of biological role, membrane-anchoring mono-heme cytochrome b subunit of succinate dehydrogenase (SDH) that is involved in system II of the mitochondrial electron transport chain and is responsible for transferring electrons from succinate to ubiquinone (coenzyme Q). SDH3 and SDH4 form the membrane dimer that anchors the catalytic dimer formed by SDH1 and SDH2 to the matrix surface of the mitochondrial inner membrane. Electrons originating from the catalytic dimer enter the membrane dimer for ubiquinone reduction. This is Succinate dehydrogenase [ubiquinone] cytochrome b subunit, mitochondrial (SDH3) from Saccharomyces cerevisiae (strain ATCC 204508 / S288c) (Baker's yeast).